A 317-amino-acid polypeptide reads, in one-letter code: tRNA dimethylallyltransferase (317 aa).

14 to 21 contacts ATP; the sequence is GPTASGKS. 16–21 serves as a coordination point for substrate; sequence TASGKS. Interaction with substrate tRNA regions lie at residues 39-42 and 163-167; these read DSVL and QRIQR.

It belongs to the IPP transferase family. As to quaternary structure, monomer. The cofactor is Mg(2+).

It catalyses the reaction adenosine(37) in tRNA + dimethylallyl diphosphate = N(6)-dimethylallyladenosine(37) in tRNA + diphosphate. Its function is as follows. Catalyzes the transfer of a dimethylallyl group onto the adenine at position 37 in tRNAs that read codons beginning with uridine, leading to the formation of N6-(dimethylallyl)adenosine (i(6)A). This chain is tRNA dimethylallyltransferase, found in Xylella fastidiosa (strain 9a5c).